Consider the following 291-residue polypeptide: G1/S-specific cyclin-D2 (291 aa).

Residues 261–291 (TRQQTQQRNSSKSVDELDQASTPTDVQDINL) form a disordered region. The span at 279 to 291 (QASTPTDVQDINL) shows a compositional bias: polar residues. T282 bears the Phosphothreonine mark.

It belongs to the cyclin family. Cyclin D subfamily. As to quaternary structure, interacts with the cdk4 and cdk6 protein kinases to form a serine/threonine kinase holoenzyme complex. The cyclin subunit imparts substrate specificity to the complex. Phosphorylation at Thr-282 by MAP kinases is required for ubiquitination and degradation by the DCX(AMBRA1) complex. In terms of processing, ubiquitinated by the DCX(AMBRA1) complex during the transition from G1 to S cell phase, leading to its degradation: ubiquitination is dependent on Thr-282 phosphorylation. The DCX(AMBRA1) complex represents the major regulator of CCND2 stability during the G1/S transition.

It is found in the nucleus. The protein resides in the cytoplasm. It localises to the nucleus membrane. Its function is as follows. Regulatory component of the cyclin D2-CDK4 (DC) complex that phosphorylates and inhibits members of the retinoblastoma (RB) protein family including RB1 and regulates the cell-cycle during G(1)/S transition. Phosphorylation of RB1 allows dissociation of the transcription factor E2F from the RB/E2F complex and the subsequent transcription of E2F target genes which are responsible for the progression through the G(1) phase. Hypophosphorylates RB1 in early G(1) phase. Cyclin D-CDK4 complexes are major integrators of various mitogenenic and antimitogenic signals. The sequence is that of G1/S-specific cyclin-D2 (ccnd2) from Xenopus laevis (African clawed frog).